The sequence spans 507 residues: ATP synthase subunit alpha, chloroplastic (507 aa).

170–177 is an ATP binding site; that stretch reads GDRQTGKT.

Belongs to the ATPase alpha/beta chains family. As to quaternary structure, F-type ATPases have 2 components, CF(1) - the catalytic core - and CF(0) - the membrane proton channel. CF(1) has five subunits: alpha(3), beta(3), gamma(1), delta(1), epsilon(1). CF(0) has four main subunits: a, b, b' and c.

It is found in the plastid. The protein resides in the chloroplast thylakoid membrane. The catalysed reaction is ATP + H2O + 4 H(+)(in) = ADP + phosphate + 5 H(+)(out). In terms of biological role, produces ATP from ADP in the presence of a proton gradient across the membrane. The alpha chain is a regulatory subunit. This Phalaenopsis aphrodite subsp. formosana (Moth orchid) protein is ATP synthase subunit alpha, chloroplastic.